An 87-amino-acid chain; its full sequence is Small ribosomal subunit protein uS19 (87 aa).

It belongs to the universal ribosomal protein uS19 family.

Functionally, protein S19 forms a complex with S13 that binds strongly to the 16S ribosomal RNA. In Mycoplasma genitalium (strain ATCC 33530 / DSM 19775 / NCTC 10195 / G37) (Mycoplasmoides genitalium), this protein is Small ribosomal subunit protein uS19 (rpsS).